Consider the following 501-residue polypeptide: Suppressor of hairless protein homolog (501 aa).

DNA-binding regions lie at residues Gln-58–Phe-68, Ser-166–Lys-171, and Arg-193–Thr-198. Residues Pro-356–Thr-446 form the IPT/TIG domain.

This sequence belongs to the Su(H) family. In terms of assembly, interacts with activated Notch proteins. Forms a ternary complex with nrarp and the intracellular domain (NICD) of notch1. Interacts with rita1, leading to nuclear export, prevent the interaction between rbpj and NICD product and subsequent down-regulation of the Notch signaling pathway.

Its subcellular location is the nucleus. It localises to the cytoplasm. Its function is as follows. Transcriptional regulator that plays a central role in Notch signaling, a signaling pathway involved in cell-cell communication that regulates a broad spectrum of cell-fate determinations. Acts as a transcriptional repressor when it is not associated with Notch proteins. When associated with some NICD product of Notch proteins (Notch intracellular domain), it acts as a transcriptional activator that activates transcription of Notch target genes. Required for the transcriptional activation of ESR1, suggesting that it is required during primary neurogenesis in embryos. Binds to the oxygen responsive element of COX4I2 and activates its transcription under hypoxia conditions (4% oxygen). In Xenopus laevis (African clawed frog), this protein is Suppressor of hairless protein homolog (rbpj).